A 388-amino-acid polypeptide reads, in one-letter code: Carbamoyl phosphate synthase small chain (388 aa).

The tract at residues 1-198 (MSQDLLPGVT…WPEGYAKLDK (198 aa)) is CPSase. Positions 53, 250, and 252 each coordinate L-glutamine. One can recognise a Glutamine amidotransferase type-1 domain in the interval 202 to 388 (EVVVIDYGVK…RFAGLMDAAK (187 aa)). The Nucleophile role is filled by Cys279. Positions 280, 283, 321, 323, and 324 each coordinate L-glutamine. Catalysis depends on residues His363 and Glu365.

Belongs to the CarA family. As to quaternary structure, composed of two chains; the small (or glutamine) chain promotes the hydrolysis of glutamine to ammonia, which is used by the large (or ammonia) chain to synthesize carbamoyl phosphate. Tetramer of heterodimers (alpha,beta)4.

The catalysed reaction is hydrogencarbonate + L-glutamine + 2 ATP + H2O = carbamoyl phosphate + L-glutamate + 2 ADP + phosphate + 2 H(+). It carries out the reaction L-glutamine + H2O = L-glutamate + NH4(+). Its pathway is amino-acid biosynthesis; L-arginine biosynthesis; carbamoyl phosphate from bicarbonate: step 1/1. It functions in the pathway pyrimidine metabolism; UMP biosynthesis via de novo pathway; (S)-dihydroorotate from bicarbonate: step 1/3. Its function is as follows. Small subunit of the glutamine-dependent carbamoyl phosphate synthetase (CPSase). CPSase catalyzes the formation of carbamoyl phosphate from the ammonia moiety of glutamine, carbonate, and phosphate donated by ATP, constituting the first step of 2 biosynthetic pathways, one leading to arginine and/or urea and the other to pyrimidine nucleotides. The small subunit (glutamine amidotransferase) binds and cleaves glutamine to supply the large subunit with the substrate ammonia. The protein is Carbamoyl phosphate synthase small chain of Caulobacter vibrioides (strain ATCC 19089 / CIP 103742 / CB 15) (Caulobacter crescentus).